Reading from the N-terminus, the 181-residue chain is Oligoribonuclease (181 aa).

Residues 8-171 enclose the Exonuclease domain; it reads LIWVDLEMTG…DDIRESIAEL (164 aa). The active site involves Tyr129.

This sequence belongs to the oligoribonuclease family.

Its subcellular location is the cytoplasm. Its function is as follows. 3'-to-5' exoribonuclease specific for small oligoribonucleotides. This Aliivibrio fischeri (strain ATCC 700601 / ES114) (Vibrio fischeri) protein is Oligoribonuclease.